Reading from the N-terminus, the 442-residue chain is 3-ketoacyl-CoA thiolase (442 aa).

Catalysis depends on Cys-105, which acts as the Acyl-thioester intermediate. Active-site proton acceptor residues include His-398 and Cys-428.

Belongs to the thiolase-like superfamily. Thiolase family. As to quaternary structure, heterotetramer of two alpha chains (FadJ) and two beta chains (FadI).

It localises to the cytoplasm. The enzyme catalyses an acyl-CoA + acetyl-CoA = a 3-oxoacyl-CoA + CoA. Its pathway is lipid metabolism; fatty acid beta-oxidation. Catalyzes the final step of fatty acid oxidation in which acetyl-CoA is released and the CoA ester of a fatty acid two carbons shorter is formed. In Aliivibrio fischeri (strain MJ11) (Vibrio fischeri), this protein is 3-ketoacyl-CoA thiolase.